The primary structure comprises 74 residues: UPF0270 protein NT01EI_3666 (74 aa).

Belongs to the UPF0270 family.

The polypeptide is UPF0270 protein NT01EI_3666 (Edwardsiella ictaluri (strain 93-146)).